A 344-amino-acid chain; its full sequence is L-rhamnose-proton symporter (344 aa).

Transmembrane regions (helical) follow at residues 4–24 (AITM…CFYA), 38–58 (WSVG…ALLL), 68–88 (FNLS…IGNI), 101–121 (MGIG…TPII), 137–157 (TLLG…AGQL), 175–195 (LLLA…MNAA), 214–234 (LPSY…FCFI), 259–279 (ILLS…YAWG), 290–310 (MSWM…GLVL), and 321–341 (VAVL…VGLG).

Belongs to the L-rhamnose transporter (TC 2.A.7.6) family.

It is found in the cell inner membrane. It catalyses the reaction L-rhamnopyranose(in) + H(+)(in) = L-rhamnopyranose(out) + H(+)(out). In terms of biological role, uptake of L-rhamnose across the cytoplasmic membrane with the concomitant transport of protons into the cell (symport system). The protein is L-rhamnose-proton symporter of Salmonella agona (strain SL483).